We begin with the raw amino-acid sequence, 235 residues long: N-alpha-acetyltransferase 10 (235 aa).

Met1 bears the N-acetylmethionine mark. Residues 1-58 form an interaction with NAA15 region; that stretch reads MNIRNARPEDLMNMQHCNLLCLPENYQMKYYFYHGLSWPQLSYIAEDENGKIVGYVLA. Residues 1 to 152 form the N-acetyltransferase domain; that stretch reads MNIRNARPED…DAYAMKRDLT (152 aa). At Lys136 the chain carries N6-acetyllysine; by autocatalysis. The segment covering 196–213 has biased composition (basic and acidic residues); that stretch reads EEKGLAAEDSGGDSKDLS. The interval 196 to 235 is disordered; that stretch reads EEKGLAAEDSGGDSKDLSEVSETTESTDVKDSSEASDSAS. Ser205 is modified (phosphoserine). Residue Ser209 is modified to Phosphoserine; by IKKB. Phosphoserine is present on residues Ser213 and Ser216.

This sequence belongs to the acetyltransferase family. ARD1 subfamily. As to quaternary structure, component of the N-terminal acetyltransferase A complex (also called the NatA complex) composed of NAA10 and NAA15. Interacts with NAA15. Component of the N-terminal acetyltransferase A (NatA)/HYPK complex at least composed of NAA10, NAA15 and HYPK, which has N-terminal acetyltransferase activity. In complex with NAA15, interacts with HYPK. Component of the N-terminal acetyltransferase E (NatE) complex at least composed of NAA10, NAA15 and NAA50. Within the complex interacts with NAA15; the interaction is required for binding to NAAT50. Interacts with NAAT50. The interaction of the NatA complex with NAA50 reduces the acetylation activity of the NatA complex. Component of the N-terminal acetyltransferase E (NatE)/HYPK complex at least composed of NAA10, NAA15, NAA50 and HYPK. In complex with NAA15, interacts with HYPK; the interaction with HYPK reduces the capacity of the NatA complex to interact with NAA50. Interacts with HIF1A (via its ODD domain); the interaction increases HIF1A protein stability during normoxia, an down-regulates it when induced by hypoxia. Interacts with the ribosome. Binds to MYLK. Interacts with NAA16. Interacts (via its C-terminal domain) with TSC2, leading to its acetylation. Interacts with IKBKB. Interacts with HSPA1A and HSPA1B leading to its acetylation. Cleaved by caspases during apoptosis. In terms of processing, phosphorylation by IKBKB/IKKB at Ser-209 destabilises NAA10 and promotes its proteasome-mediated degradation. Post-translationally, autoacetylated at Lys-136 which stimulates its catalytic activity. In terms of tissue distribution, ubiquitous.

The protein localises to the cytoplasm. It is found in the nucleus. The enzyme catalyses N-terminal glycyl-[protein] + acetyl-CoA = N-terminal N(alpha)-acetylglycyl-[protein] + CoA + H(+). It catalyses the reaction N-terminal L-alanyl-[protein] + acetyl-CoA = N-terminal N(alpha)-acetyl-L-alanyl-[protein] + CoA + H(+). It carries out the reaction N-terminal L-seryl-[protein] + acetyl-CoA = N-terminal N(alpha)-acetyl-L-seryl-[protein] + CoA + H(+). The catalysed reaction is N-terminal L-valyl-[protein] + acetyl-CoA = N-terminal N(alpha)-acetyl-L-valyl-[protein] + CoA + H(+). The enzyme catalyses N-terminal L-cysteinyl-[protein] + acetyl-CoA = N-terminal N(alpha)-acetyl-L-cysteinyl-[protein] + CoA + H(+). It catalyses the reaction N-terminal L-threonyl-[protein] + acetyl-CoA = N-terminal N(alpha)-acetyl-L-threonyl-[protein] + CoA + H(+). In terms of biological role, catalytic subunit of the N-terminal acetyltransferase A (NatA) complex which displays alpha (N-terminal) acetyltransferase activity. Acetylates amino termini that are devoid of initiator methionine. The alpha (N-terminal) acetyltransferase activity may be important for vascular, hematopoietic and neuronal growth and development. Without NAA15, displays epsilon (internal) acetyltransferase activity towards HIF1A, thereby promoting its degradation. Represses MYLK kinase activity by acetylation, and thus represses tumor cell migration. Acetylates, and stabilizes TSC2, thereby repressing mTOR activity and suppressing cancer development. Acetylates HSPA1A and HSPA1B at 'Lys-77' which enhances its chaperone activity and leads to preferential binding to co-chaperone HOPX. Acetylates HIST1H4A. Acts as a negative regulator of sister chromatid cohesion during mitosis. This chain is N-alpha-acetyltransferase 10 (Naa10), found in Mus musculus (Mouse).